An 861-amino-acid polypeptide reads, in one-letter code: Valine--tRNA ligase (861 aa).

Residues Pro42–His52 carry the 'HIGH' region motif. The 'KMSKS' region signature appears at Lys521 to Ser525. Lys524 contributes to the ATP binding site. Residues Val792 to Met861 adopt a coiled-coil conformation.

Belongs to the class-I aminoacyl-tRNA synthetase family. ValS type 1 subfamily. As to quaternary structure, monomer.

It localises to the cytoplasm. It carries out the reaction tRNA(Val) + L-valine + ATP = L-valyl-tRNA(Val) + AMP + diphosphate. Its function is as follows. Catalyzes the attachment of valine to tRNA(Val). As ValRS can inadvertently accommodate and process structurally similar amino acids such as threonine, to avoid such errors, it has a 'posttransfer' editing activity that hydrolyzes mischarged Thr-tRNA(Val) in a tRNA-dependent manner. This Pseudothermotoga lettingae (strain ATCC BAA-301 / DSM 14385 / NBRC 107922 / TMO) (Thermotoga lettingae) protein is Valine--tRNA ligase.